A 187-amino-acid polypeptide reads, in one-letter code: Tumor necrosis factor ligand superfamily member 4 (187 aa).

The Cytoplasmic segment spans residues 1–23 (MEGVRPLEENVGNAPRPRFERNK). A helical; Signal-anchor for type II membrane protein membrane pass occupies residues 24 to 44 (LLLVASVVQALGLLLCLTYVC). At 45–187 (QHSHAPEVSL…LQNPGGYCAP (143 aa)) the chain is on the extracellular side. One can recognise a THD domain in the interval 58–177 (PIENIMTQLQ…SVNAGELIVI (120 aa)). Intrachain disulfides connect C74/C164 and C101/C185. N-linked (GlcNAc...) asparagine glycosylation is found at N94 and N156.

It belongs to the tumor necrosis factor family. Homotrimer.

The protein localises to the membrane. Cytokine that binds to TNFRSF4. Co-stimulates T-cell proliferation and cytokine production. The chain is Tumor necrosis factor ligand superfamily member 4 (TNFSF4) from Oryctolagus cuniculus (Rabbit).